The primary structure comprises 137 residues: Putative protein YjhV (137 aa).

Residues 1 to 16 (MVGYHQTNQKTDTGKT) are compositionally biased toward polar residues. Positions 1–20 (MVGYHQTNQKTDTGKTLTRR) are disordered.

This chain is Putative protein YjhV (yjhV), found in Escherichia coli (strain K12).